The chain runs to 180 residues: Large ribosomal subunit protein uL18m (180 aa).

This sequence belongs to the universal ribosomal protein uL18 family. In terms of assembly, component of the mitochondrial ribosome large subunit (39S) which comprises a 16S rRNA and about 50 distinct proteins.

The protein localises to the mitochondrion. Its function is as follows. Together with thiosulfate sulfurtransferase (TST), acts as a mitochondrial import factor for the cytosolic 5S rRNA. The precursor form shows RNA chaperone activity; is able to fold the 5S rRNA into an import-competent conformation that is recognized by rhodanese (TST). Both the cytoplasmic and mitochondrial forms are able to bind to the helix IV-loop D in the gamma domain of the 5S rRNA. This Mus musculus (Mouse) protein is Large ribosomal subunit protein uL18m (Mrpl18).